Here is a 491-residue protein sequence, read N- to C-terminus: Ketol-acid reductoisomerase (NADP(+)) (491 aa).

The KARI N-terminal Rossmann domain maps to 15–208 (AQLGKCRFMG…GGHRAGVLES (194 aa)). NADP(+)-binding positions include 45 to 48 (CGAQ), Arg68, Arg76, Ser78, and 108 to 110 (DKQ). His132 is a catalytic residue. Gly158 provides a ligand contact to NADP(+). 2 KARI C-terminal knotted domains span residues 209–344 (SFVA…TAPQ) and 345–484 (YEGK…MTDM). Residues Asp217, Glu221, Glu389, and Glu393 each contribute to the Mg(2+) site. Position 414 (Ser414) interacts with substrate.

This sequence belongs to the ketol-acid reductoisomerase family. Mg(2+) serves as cofactor.

It carries out the reaction (2R)-2,3-dihydroxy-3-methylbutanoate + NADP(+) = (2S)-2-acetolactate + NADPH + H(+). It catalyses the reaction (2R,3R)-2,3-dihydroxy-3-methylpentanoate + NADP(+) = (S)-2-ethyl-2-hydroxy-3-oxobutanoate + NADPH + H(+). It functions in the pathway amino-acid biosynthesis; L-isoleucine biosynthesis; L-isoleucine from 2-oxobutanoate: step 2/4. It participates in amino-acid biosynthesis; L-valine biosynthesis; L-valine from pyruvate: step 2/4. In terms of biological role, involved in the biosynthesis of branched-chain amino acids (BCAA). Catalyzes an alkyl-migration followed by a ketol-acid reduction of (S)-2-acetolactate (S2AL) to yield (R)-2,3-dihydroxy-isovalerate. In the isomerase reaction, S2AL is rearranged via a Mg-dependent methyl migration to produce 3-hydroxy-3-methyl-2-ketobutyrate (HMKB). In the reductase reaction, this 2-ketoacid undergoes a metal-dependent reduction by NADPH to yield (R)-2,3-dihydroxy-isovalerate. The chain is Ketol-acid reductoisomerase (NADP(+)) from Klebsiella pneumoniae (strain 342).